Consider the following 69-residue polypeptide: Large ribosomal subunit protein uL29 (69 aa).

The protein belongs to the universal ribosomal protein uL29 family.

The polypeptide is Large ribosomal subunit protein uL29 (rpmC) (Lactococcus lactis subsp. lactis (strain IL1403) (Streptococcus lactis)).